Reading from the N-terminus, the 153-residue chain is uncharacterized protein (153 aa).

Positions 72 to 98 are disordered; sequence LPISKTNDAERSQQTTKAPVMERTESS.

It is found in the cytoplasm. The protein localises to the nucleus. This is an uncharacterized protein from Schizosaccharomyces pombe (strain 972 / ATCC 24843) (Fission yeast).